Reading from the N-terminus, the 303-residue chain is Nucleotide-binding protein SAR0820 (303 aa).

Residue 18–25 (GLSGAGKS) participates in ATP binding. GTP is bound at residue 69-72 (DLRG).

This sequence belongs to the RapZ-like family.

Displays ATPase and GTPase activities. The protein is Nucleotide-binding protein SAR0820 of Staphylococcus aureus (strain MRSA252).